Reading from the N-terminus, the 212-residue chain is MTQGAVKTTGKRSRAVSAKKKAILSAALDTFSQFGFHGTRLEQIAELAGVSKTNLLYYFPSKEALYIAVLRQILDIWLAPLKAFREDFAPLAAIKEYIRLKLEVSRDYPQASRLFCMEMLAGAPLLMDELTGDLKALIDEKSALIAGWVKSGKLAPIDPQHLIFMIWASTQHYADFAPQVEAVTGATLRDEVFFNQTVENVQRIIIEGIRPR.

Residues 17 to 77 (SAKKKAILSA…AVLRQILDIW (61 aa)) form the HTH tetR-type domain. Residues 39–58 (TRLEQIAELAGVSKTNLLYY) constitute a DNA-binding region (H-T-H motif).

As to quaternary structure, homodimer.

In terms of biological role, master transcription regulator which represses the degradation of pyrimidines (rutABCDEFG) and purines (gcl operon) for maintenance of metabolic balance between pyrimidines and purines. It also regulates the synthesis of pyrimidine nucleotides and arginine from glutamine (carAB) and the supply of glutamate (gadABWX). This chain is HTH-type transcriptional regulator RutR (rutR), found in Escherichia coli O6:H1 (strain CFT073 / ATCC 700928 / UPEC).